Reading from the N-terminus, the 303-residue chain is US1 protein (303 aa).

The disordered stretch occupies residues 230 to 284 (IPAPGRPLPRRRPSEGGMRAPRRRSRAPAPARSTAAAATPPRPGDPRAPAARRAG). Over residues 256–268 (APAPARSTAAAAT) the composition is skewed to low complexity.

This sequence belongs to the herpesviridae US2 family.

The polypeptide is US1 protein (US1) (Equine herpesvirus 1 (strain Kentucky A) (EHV-1)).